Reading from the N-terminus, the 245-residue chain is MIPQRILMKFFDFHIQGRDHDSSLRLLLEASRLGYQGGVLVYPSERYPDLKSDLESLRENPELQDFEIARGVMINASDPRDMRRSVNKFRKKADVIYVSGGNLKVNRAACESRRVDVLSAPYTSRRDPGINHVLAREAARNNVAVELPLADVIGSWLKVRARVLEQFREILKLHRKFGFPLLLTSRASSIYDLRTPGDIMNLAECFGMESSEAEESLTSTPASILEDSGNRHLLIAEGVRLLPES.

It belongs to the eukaryotic/archaeal RNase P protein component 3 family. Consists of a catalytic RNA component and at least 4-5 protein subunits.

The protein resides in the cytoplasm. It carries out the reaction Endonucleolytic cleavage of RNA, removing 5'-extranucleotides from tRNA precursor.. Part of ribonuclease P, a protein complex that generates mature tRNA molecules by cleaving their 5'-ends. This Methanothermobacter thermautotrophicus (strain ATCC 29096 / DSM 1053 / JCM 10044 / NBRC 100330 / Delta H) (Methanobacterium thermoautotrophicum) protein is Ribonuclease P protein component 3.